The chain runs to 313 residues: Methionyl-tRNA formyltransferase (313 aa).

The segment at 32–51 is disordered; sequence QPDRRKGRGKELQPPPAKRK. 109–112 provides a ligand contact to (6S)-5,6,7,8-tetrahydrofolate; the sequence is SLLP.

It belongs to the Fmt family.

The enzyme catalyses L-methionyl-tRNA(fMet) + (6R)-10-formyltetrahydrofolate = N-formyl-L-methionyl-tRNA(fMet) + (6S)-5,6,7,8-tetrahydrofolate + H(+). Functionally, attaches a formyl group to the free amino group of methionyl-tRNA(fMet). The formyl group appears to play a dual role in the initiator identity of N-formylmethionyl-tRNA by promoting its recognition by IF2 and preventing the misappropriation of this tRNA by the elongation apparatus. The chain is Methionyl-tRNA formyltransferase from Natranaerobius thermophilus (strain ATCC BAA-1301 / DSM 18059 / JW/NM-WN-LF).